A 281-amino-acid polypeptide reads, in one-letter code: Arylamine N-acetyltransferase / N-hydroxyarylamine O-acetyltransferase (281 aa).

Cys69 serves as the catalytic Acyl-thioester intermediate. Active-site residues include His107 and Asp122.

The protein belongs to the arylamine N-acetyltransferase family. In terms of assembly, monomer and homodimer.

It localises to the cytoplasm. It carries out the reaction an arylamine + acetyl-CoA = an N-acetylarylamine + CoA. It catalyses the reaction an N-hydroxyarylamine + acetyl-CoA = an N-acetoxyarylamine + CoA. Inhibited by N-ethylmaleimide and iodoacetamide. Its function is as follows. Catalyzes both the acetyl-CoA-dependent N-acetylation of aromatic amines and the O-acetylation of N-hydroxyarylamines. In vitro, catalyzes the O-acetylation of N-hydroxy-Glu-P-1, and the N-acetylation of isoniazid and 2-aminofluorene. This is Arylamine N-acetyltransferase / N-hydroxyarylamine O-acetyltransferase (nhoA) from Salmonella typhimurium (strain LT2 / SGSC1412 / ATCC 700720).